A 686-amino-acid chain; its full sequence is Putative xyloglucan glycosyltransferase 10 (686 aa).

Transmembrane regions (helical) follow at residues 114 to 134 (LYAF…VELA) and 160 to 180 (AAYV…LFLV). Residue D267 is part of the active site. 2 residues coordinate substrate: D326 and D328. The active site involves D420. 4 helical membrane-spanning segments follow: residues 498 to 518 (LILP…TMFI), 523 to 543 (LPDW…ILPA), 640 to 656 (ELAL…RSLL), and 661 to 681 (IHFY…LDLI).

Belongs to the glycosyltransferase 2 family. Plant cellulose synthase-like C subfamily.

The protein resides in the golgi apparatus membrane. Probable beta-1,4-glucan synthase rather involved in the synthesis of the xyloglucan backbone than cellulose. Seems to work simultaneously with xyloglucan 6-xylosyltransferase. Xyloglucan is a noncellulosic polysaccharides of plant cell wall and consists of a glucan backbone substituted by xylose, galactose and fucose. The chain is Putative xyloglucan glycosyltransferase 10 (CSLC10) from Oryza sativa subsp. indica (Rice).